The following is a 489-amino-acid chain: Coronin-1B (489 aa).

Position 2 is a phosphoserine (serine 2). 5 WD repeats span residues glycine 80–proline 120, glycine 130–arginine 170, leucine 174–glutamate 213, alanine 217–alanine 260, and aspartate 265–histidine 305. The segment at aspartate 414–serine 443 is disordered. Over residues glycine 427–serine 443 the composition is skewed to low complexity. Positions glutamate 449–isoleucine 474 form a coiled coil.

It belongs to the WD repeat coronin family. Forms homooligomers, but does not form complexes with the other coronins. Interacts with Arp2/3 complex components, including ACTR2, ARPC1B and ARPC2. Binds actin. Phosphorylation on Ser-2 regulates the interaction with the Arp2/3 complex and cell motility in fibroblasts. Phosphorylation does not seem to affect subcellular location.

The protein resides in the cytoplasm. It is found in the cytoskeleton. Its subcellular location is the stress fiber. Regulates leading edge dynamics and cell motility in fibroblasts. May be involved in cytokinesis and signal transduction. The sequence is that of Coronin-1B (CORO1B) from Pongo abelii (Sumatran orangutan).